The chain runs to 162 residues: Shikimate kinase (162 aa).

Residue Gly11–Ser16 participates in ATP binding. Ser15 serves as a coordination point for Mg(2+). Asp33, Arg57, and Gly80 together coordinate substrate. Arg116 provides a ligand contact to ATP. Position 132 (Arg132) interacts with substrate.

Belongs to the shikimate kinase family. In terms of assembly, monomer. Requires Mg(2+) as cofactor.

The protein localises to the cytoplasm. It catalyses the reaction shikimate + ATP = 3-phosphoshikimate + ADP + H(+). The protein operates within metabolic intermediate biosynthesis; chorismate biosynthesis; chorismate from D-erythrose 4-phosphate and phosphoenolpyruvate: step 5/7. In terms of biological role, catalyzes the specific phosphorylation of the 3-hydroxyl group of shikimic acid using ATP as a cosubstrate. The polypeptide is Shikimate kinase (Helicobacter pylori (strain G27)).